We begin with the raw amino-acid sequence, 317 residues long: Putative HTH-type transcriptional regulatory protein TGAM_1316 (317 aa).

Residues 131 to 189 (LKKLREKHGYSVGELASLLGVSRKSLLNYERNEQAVSLEVALRMEELFDEPIAEPIDVL) form the HTH cro/C1-type domain. The segment at residues 142–161 (VGELASLLGVSRKSLLNYER) is a DNA-binding region (H-T-H motif).

This chain is Putative HTH-type transcriptional regulatory protein TGAM_1316, found in Thermococcus gammatolerans (strain DSM 15229 / JCM 11827 / EJ3).